Reading from the N-terminus, the 438-residue chain is Enolase (438 aa).

Histidine 159 and glutamate 168 together coordinate substrate. Residue glutamate 211 is the Proton donor of the active site. Mg(2+) is bound by residues aspartate 246, glutamate 297, and aspartate 322. Substrate is bound by residues glutamate 297 and aspartate 322. Lysine 347 functions as the Proton acceptor in the catalytic mechanism. Substrate contacts are provided by residues serine 374–serine 377 and lysine 398.

This sequence belongs to the enolase family. Homodimer. Mg(2+) serves as cofactor.

The protein localises to the cytoplasm. The enzyme catalyses (2R)-2-phosphoglycerate = phosphoenolpyruvate + H2O. It functions in the pathway carbohydrate degradation; glycolysis; pyruvate from D-glyceraldehyde 3-phosphate: step 4/5. This Neurospora crassa (strain ATCC 24698 / 74-OR23-1A / CBS 708.71 / DSM 1257 / FGSC 987) protein is Enolase (emp-7).